The primary structure comprises 286 residues: 2,3,4,5-tetrahydropyridine-2,6-dicarboxylate N-succinyltransferase (286 aa).

Substrate is bound by residues Arg111 and Asp148.

Belongs to the transferase hexapeptide repeat family. In terms of assembly, homotrimer.

Its subcellular location is the cytoplasm. The enzyme catalyses (S)-2,3,4,5-tetrahydrodipicolinate + succinyl-CoA + H2O = (S)-2-succinylamino-6-oxoheptanedioate + CoA. Its pathway is amino-acid biosynthesis; L-lysine biosynthesis via DAP pathway; LL-2,6-diaminopimelate from (S)-tetrahydrodipicolinate (succinylase route): step 1/3. The protein is 2,3,4,5-tetrahydropyridine-2,6-dicarboxylate N-succinyltransferase of Rhizobium etli (strain ATCC 51251 / DSM 11541 / JCM 21823 / NBRC 15573 / CFN 42).